The sequence spans 116 residues: Large ribosomal subunit protein bL19 (116 aa).

Belongs to the bacterial ribosomal protein bL19 family.

In terms of biological role, this protein is located at the 30S-50S ribosomal subunit interface and may play a role in the structure and function of the aminoacyl-tRNA binding site. This Staphylococcus aureus (strain USA300) protein is Large ribosomal subunit protein bL19.